Here is a 391-residue protein sequence, read N- to C-terminus: Phosphoglycerate kinase (391 aa).

Substrate is bound by residues 21–23 (DFN), Arg41, 64–67 (HLGR), Arg121, and Arg154. Residues Lys205, Glu322, and 348-351 (GGDS) contribute to the ATP site.

This sequence belongs to the phosphoglycerate kinase family. In terms of assembly, monomer.

It localises to the cytoplasm. The enzyme catalyses (2R)-3-phosphoglycerate + ATP = (2R)-3-phospho-glyceroyl phosphate + ADP. It participates in carbohydrate degradation; glycolysis; pyruvate from D-glyceraldehyde 3-phosphate: step 2/5. This Solibacter usitatus (strain Ellin6076) protein is Phosphoglycerate kinase.